The sequence spans 440 residues: Thymidine phosphorylase (440 aa).

This sequence belongs to the thymidine/pyrimidine-nucleoside phosphorylase family. Homodimer.

The enzyme catalyses thymidine + phosphate = 2-deoxy-alpha-D-ribose 1-phosphate + thymine. It participates in pyrimidine metabolism; dTMP biosynthesis via salvage pathway; dTMP from thymine: step 1/2. In terms of biological role, the enzymes which catalyze the reversible phosphorolysis of pyrimidine nucleosides are involved in the degradation of these compounds and in their utilization as carbon and energy sources, or in the rescue of pyrimidine bases for nucleotide synthesis. The chain is Thymidine phosphorylase from Burkholderia pseudomallei (strain K96243).